The sequence spans 339 residues: Catalase-related peroxidase (339 aa).

Residues 1-31 form the signal peptide; sequence MIRIRNRWFRWLAIALASLVASIGIATVGFA. Residue H58 is part of the active site. Residue Y328 coordinates heme.

The protein belongs to the catalase family. Heme is required as a cofactor.

Its subcellular location is the periplasm. Has an organic peroxide-dependent peroxidase activity. This is Catalase-related peroxidase (srpA) from Synechococcus elongatus (strain ATCC 33912 / PCC 7942 / FACHB-805) (Anacystis nidulans R2).